The chain runs to 226 residues: Glutathione S-transferase kappa 1 (226 aa).

16 to 18 serves as a coordination point for glutathione; that stretch reads SPY. Residue K49 is modified to N6-succinyllysine. Residue N53 coordinates glutathione. 2 positions are modified to N6-acetyllysine: K71 and K85. At K116 the chain carries N6-acetyllysine; alternate. K116 is modified (N6-succinyllysine; alternate). At K144 the chain carries N6-succinyllysine. At K158 the chain carries N6-acetyllysine; alternate. K158 is subject to N6-succinyllysine; alternate. Residues K165 and K169 each carry the N6-acetyllysine modification. Residues L183 and 200-201 contribute to the glutathione site; that span reads SD.

This sequence belongs to the GST superfamily. Kappa family. Homodimer. In terms of tissue distribution, ubiquitous.

It is found in the peroxisome. It carries out the reaction RX + glutathione = an S-substituted glutathione + a halide anion + H(+). Functionally, glutathione S-transferase that catalyzes the conjugation of glutathione to exogenous and endogenous compounds. Significant glutathione conjugating activity is found only with the model substrate, 1-chloro-2,4-dinitrobenzene (CDNB). The chain is Glutathione S-transferase kappa 1 (GSTK1) from Homo sapiens (Human).